The sequence spans 464 residues: ATP-dependent protease ATPase subunit HslU (464 aa).

ATP is bound by residues Val18, 60 to 65, Asp277, Glu342, and Arg414; that span reads GVGKTE.

This sequence belongs to the ClpX chaperone family. HslU subfamily. In terms of assembly, a double ring-shaped homohexamer of HslV is capped on each side by a ring-shaped HslU homohexamer. The assembly of the HslU/HslV complex is dependent on binding of ATP.

It is found in the cytoplasm. Functionally, ATPase subunit of a proteasome-like degradation complex; this subunit has chaperone activity. The binding of ATP and its subsequent hydrolysis by HslU are essential for unfolding of protein substrates subsequently hydrolyzed by HslV. HslU recognizes the N-terminal part of its protein substrates and unfolds these before they are guided to HslV for hydrolysis. The protein is ATP-dependent protease ATPase subunit HslU of Lactobacillus delbrueckii subsp. bulgaricus (strain ATCC 11842 / DSM 20081 / BCRC 10696 / JCM 1002 / NBRC 13953 / NCIMB 11778 / NCTC 12712 / WDCM 00102 / Lb 14).